A 317-amino-acid polypeptide reads, in one-letter code: Putative HTH-type transcriptional regulatory protein Mboo_0195 (317 aa).

Positions 132-185 (LRELRERRSMSLGDLGQVLGVSRRTISKYESGMGTTLEVAIRIEEYFNTGVVES) constitute an HTH cro/C1-type domain. Positions 143-162 (LGDLGQVLGVSRRTISKYES) form a DNA-binding region, H-T-H motif.

This Methanoregula boonei (strain DSM 21154 / JCM 14090 / 6A8) protein is Putative HTH-type transcriptional regulatory protein Mboo_0195.